The sequence spans 439 residues: Serine/threonine-protein kinase 2 (439 aa).

The region spanning 87–439 is the Protein kinase domain; the sequence is NDDFYHISTG…IFSDWINGRN (353 aa). ATP is bound by residues 93–101 and K117; that span reads ISTGGYGIV. The active-site Proton acceptor is D307.

Belongs to the protein kinase superfamily. Ser/Thr protein kinase family. Post-translationally, phosphorylated in vivo. Autophosphorylated in vitro.

It localises to the host endoplasmic reticulum. It is found in the host endoplasmic reticulum-Golgi intermediate compartment. The catalysed reaction is L-seryl-[protein] + ATP = O-phospho-L-seryl-[protein] + ADP + H(+). It carries out the reaction L-threonyl-[protein] + ATP = O-phospho-L-threonyl-[protein] + ADP + H(+). Its function is as follows. Essential serine-protein kinase involved in the early stage of virion morphogenesis. The polypeptide is Serine/threonine-protein kinase 2 (OPG054) (Monkeypox virus).